The primary structure comprises 328 residues: D-alanine--D-alanine ligase (328 aa).

The 200-residue stretch at 118–317 folds into the ATP-grasp domain; the sequence is LSVLTKFNIP…MPQMLDNEIT (200 aa). Position 146–201 (146–201) interacts with ATP; it reads KKALGLPFFVKPNQSGSSLGVSKVDALDQLEKALEFAFAEDNEILIESYLNGTEVS. Mg(2+) is bound by residues aspartate 272, glutamate 284, and asparagine 286.

The protein belongs to the D-alanine--D-alanine ligase family. It depends on Mg(2+) as a cofactor. Mn(2+) is required as a cofactor.

The protein resides in the cytoplasm. The enzyme catalyses 2 D-alanine + ATP = D-alanyl-D-alanine + ADP + phosphate + H(+). It functions in the pathway cell wall biogenesis; peptidoglycan biosynthesis. Its function is as follows. Cell wall formation. In Flavobacterium psychrophilum (strain ATCC 49511 / DSM 21280 / CIP 103535 / JIP02/86), this protein is D-alanine--D-alanine ligase.